Reading from the N-terminus, the 290-residue chain is Small ribosomal subunit biogenesis GTPase RsgA (290 aa).

Positions 62-219 (DNYLIRPQVA…VVDTPGFSTL (158 aa)) constitute a CP-type G domain. Residues 111-114 (NKID) and 162-170 (GPSGVGKST) contribute to the GTP site. C243, C248, H250, and C256 together coordinate Zn(2+).

It belongs to the TRAFAC class YlqF/YawG GTPase family. RsgA subfamily. In terms of assembly, monomer. Associates with 30S ribosomal subunit, binds 16S rRNA. Zn(2+) serves as cofactor.

Its subcellular location is the cytoplasm. Functionally, one of several proteins that assist in the late maturation steps of the functional core of the 30S ribosomal subunit. Helps release RbfA from mature subunits. May play a role in the assembly of ribosomal proteins into the subunit. Circularly permuted GTPase that catalyzes slow GTP hydrolysis, GTPase activity is stimulated by the 30S ribosomal subunit. The sequence is that of Small ribosomal subunit biogenesis GTPase RsgA from Clostridium novyi (strain NT).